Consider the following 303-residue polypeptide: Nod factor export ATP-binding protein I (303 aa).

The region spanning 5 to 235 (LQMRNVRKLY…EIGCDVVEVY (231 aa)) is the ABC transporter domain. 37-44 (GPNGAGKT) is an ATP binding site.

It belongs to the ABC transporter superfamily. Lipooligosaccharide exporter (TC 3.A.1.102) family. In terms of assembly, the complex is composed of two ATP-binding proteins (NodI) and two transmembrane proteins (NodJ).

It localises to the cell inner membrane. In terms of biological role, part of the ABC transporter complex NodIJ involved in the export of the nodulation factors (Nod factors), the bacterial signal molecules that induce symbiosis and subsequent nodulation induction. Nod factors are LCO (lipo-chitin oligosaccharide), a modified beta-1,4-linked N-acetylglucosamine oligosaccharide. This subunit is responsible for energy coupling to the transport system. The protein is Nod factor export ATP-binding protein I of Cupriavidus metallidurans (strain ATCC 43123 / DSM 2839 / NBRC 102507 / CH34) (Ralstonia metallidurans).